A 269-amino-acid chain; its full sequence is Ribonuclease HII (269 aa).

Residues 28-222 enclose the RNase H type-2 domain; it reads RHVAGADEAG…VSGRRGAPPR (195 aa). Positions 34, 35, and 128 each coordinate a divalent metal cation.

Belongs to the RNase HII family. Requires Mn(2+) as cofactor. Mg(2+) serves as cofactor.

The protein localises to the cytoplasm. It catalyses the reaction Endonucleolytic cleavage to 5'-phosphomonoester.. Functionally, endonuclease that specifically degrades the RNA of RNA-DNA hybrids. This is Ribonuclease HII from Salinispora arenicola (strain CNS-205).